We begin with the raw amino-acid sequence, 434 residues long: Glutamate-1-semialdehyde 2,1-aminomutase (434 aa).

Lysine 270 carries the post-translational modification N6-(pyridoxal phosphate)lysine.

The protein belongs to the class-III pyridoxal-phosphate-dependent aminotransferase family. HemL subfamily. Homodimer. Pyridoxal 5'-phosphate is required as a cofactor.

The protein localises to the cytoplasm. The enzyme catalyses (S)-4-amino-5-oxopentanoate = 5-aminolevulinate. The protein operates within porphyrin-containing compound metabolism; protoporphyrin-IX biosynthesis; 5-aminolevulinate from L-glutamyl-tRNA(Glu): step 2/2. The sequence is that of Glutamate-1-semialdehyde 2,1-aminomutase from Pelotomaculum thermopropionicum (strain DSM 13744 / JCM 10971 / SI).